Consider the following 216-residue polypeptide: Probable GTP-binding protein EngB (216 aa).

The EngB-type G domain maps to 24–205 (ATPEIAFVGR…WARLAALAAE (182 aa)). GTP is bound by residues 32-39 (GRSNVGKS), 59-63 (GRTRA), 86-89 (DLPG), 153-156 (TKTD), and 184-186 (FSA). Ser39 and Thr61 together coordinate Mg(2+).

The protein belongs to the TRAFAC class TrmE-Era-EngA-EngB-Septin-like GTPase superfamily. EngB GTPase family. It depends on Mg(2+) as a cofactor.

Functionally, necessary for normal cell division and for the maintenance of normal septation. The sequence is that of Probable GTP-binding protein EngB from Anaeromyxobacter dehalogenans (strain 2CP-1 / ATCC BAA-258).